A 34-amino-acid chain; its full sequence is MVNWQVIGQLLSATLIVLAGPAVIFVLAFKKGNL.

The chain crosses the membrane as a helical span at residues Val6–Val26.

The protein belongs to the Psb30/Ycf12 family. As to quaternary structure, PSII is composed of 1 copy each of membrane proteins PsbA, PsbB, PsbC, PsbD, PsbE, PsbF, PsbH, PsbI, PsbJ, PsbK, PsbL, PsbM, PsbT, PsbX, PsbY, PsbZ, Psb30/Ycf12, peripheral proteins of the oxygen-evolving complex and a large number of cofactors. It forms dimeric complexes.

It localises to the plastid. The protein localises to the chloroplast thylakoid membrane. Functionally, a core subunit of photosystem II (PSII), probably helps stabilize the reaction center. This Heterosigma akashiwo (strain NIES-293 / 8280G21-1) protein is Photosystem II reaction center protein Psb30.